We begin with the raw amino-acid sequence, 398 residues long: 8-amino-7-oxononanoate synthase (398 aa).

R23 serves as a coordination point for substrate. G110–Y111 provides a ligand contact to pyridoxal 5'-phosphate. Residue H135 coordinates substrate. 3 residues coordinate pyridoxal 5'-phosphate: S181, H209, and T237. K240 is modified (N6-(pyridoxal phosphate)lysine). A substrate-binding site is contributed by T354.

This sequence belongs to the class-II pyridoxal-phosphate-dependent aminotransferase family. BioF subfamily. As to quaternary structure, homodimer. Pyridoxal 5'-phosphate serves as cofactor.

It catalyses the reaction 6-carboxyhexanoyl-[ACP] + L-alanine + H(+) = (8S)-8-amino-7-oxononanoate + holo-[ACP] + CO2. It functions in the pathway cofactor biosynthesis; biotin biosynthesis. Its function is as follows. Catalyzes the decarboxylative condensation of pimeloyl-[acyl-carrier protein] and L-alanine to produce 8-amino-7-oxononanoate (AON), [acyl-carrier protein], and carbon dioxide. This is 8-amino-7-oxononanoate synthase from Anaeromyxobacter sp. (strain K).